We begin with the raw amino-acid sequence, 54 residues long: MQLSHLLLAFAMIFVMTIMYAPQVQADAWADANADADVNCEVTPYHPDCRGVMP.

A signal peptide spans 1–26 (MQLSHLLLAFAMIFVMTIMYAPQVQA). The propeptide occupies 27–38 (DAWADANADADV).

Belongs to the formicidae venom precursor-01 superfamily. Post-translationally, contains 1 disulfide bond. Expressed by the venom gland.

The protein resides in the secreted. The sequence is that of U-myrmicitoxin(01)-Tb5a from Tetramorium bicarinatum (Tramp ant).